The following is a 198-amino-acid chain: Putative 3-methyladenine DNA glycosylase (198 aa).

This sequence belongs to the DNA glycosylase MPG family.

In Rhizobium johnstonii (strain DSM 114642 / LMG 32736 / 3841) (Rhizobium leguminosarum bv. viciae), this protein is Putative 3-methyladenine DNA glycosylase.